Consider the following 347-residue polypeptide: 3-methyl-2-oxobutanoate hydroxymethyltransferase 1, mitochondrial (347 aa).

The transit peptide at 1 to 48 (MASSLTRNCSRFSKAISVRFMSNLPENTVYGGPKPQNPNQRVTLTHLR) directs the protein to the mitochondrion. Asp83 and Asp122 together coordinate Mg(2+). 3-methyl-2-oxobutanoate contacts are provided by residues 83 to 84 (DS), Asp122, and Lys152. Position 154 (Glu154) interacts with Mg(2+). Residue Glu222 is the Proton acceptor of the active site.

It belongs to the PanB family. It depends on Mg(2+) as a cofactor.

Its subcellular location is the mitochondrion. It carries out the reaction 3-methyl-2-oxobutanoate + (6R)-5,10-methylene-5,6,7,8-tetrahydrofolate + H2O = 2-dehydropantoate + (6S)-5,6,7,8-tetrahydrofolate. The protein operates within cofactor biosynthesis; (R)-pantothenate biosynthesis; (R)-pantoate from 3-methyl-2-oxobutanoate: step 1/2. Functionally, catalyzes the reversible reaction in which hydroxymethyl group from 5,10-methylenetetrahydrofolate is transferred onto alpha-ketoisovalerate to form ketopantoate. The protein is 3-methyl-2-oxobutanoate hydroxymethyltransferase 1, mitochondrial (KPHMT1) of Arabidopsis thaliana (Mouse-ear cress).